The sequence spans 1098 residues: Paired amphipathic helix protein Sin3b (1098 aa).

The segment covering 1–25 has biased composition (gly residues); the sequence is MAHAGSGGSAGRGFGGSRWGRSGSG. The interval 1–26 is disordered; the sequence is MAHAGSGGSAGRGFGGSRWGRSGSGG. Residues 1–299 form an interaction with CRY1 region; sequence MAHAGSGGSA…VGKYGTLQEF (299 aa). 2 PAH domains span residues 30–100 and 145–230; these read LPVH…LPLG and VPLE…LPEA. An interaction with REST region spans residues 52-98; sequence PATYNGFLEIMKEFKSQSIDTPGVIRRVSQLFHEHPDLIVGFNAFLP. Residues 238 to 247 are compositionally biased toward polar residues; the sequence is NGSCEMNSGQ. A disordered region spans residues 238–274; sequence NGSCEMNSGQKNEEKSLEHNKKRSRPSLLRPVSAPAK. The segment at 275-499 is interaction with NCOR1; it reads KKMKLRGTKD…CLGGTSEVIQ (225 aa). A PAH 3 domain is found at 283-360; the sequence is KDLSIAAVGK…AQFKSFLGVK (78 aa). Residues 383–550 form an interaction with SUDS3 and HDAC1 region; sequence ASCKRIGSSY…REAQQGFNKI (168 aa). Positions 661 to 702 are disordered; the sequence is QQCPGTSDDSADERDRDRDSAEPERRRPTDEKPPADASPEPP. Residues serine 667 and serine 670 each carry the phosphoserine modification. The span at 673–694 shows a compositional bias: basic and acidic residues; sequence ERDRDRDSAEPERRRPTDEKPP.

As to quaternary structure, component of the SIN3B complex, which includes SIN3B, HDAC2 or HDAC1, PHF12 and MORF4L1. Interacts with FOXK1/MNF, MXI, MAD, NCOR1 and SAP30. Interaction with SUDS3 enhances the interaction with HDAC1 to form a complex. Interacts with CRY1, HCFC1, MAD3, MAD4, MAEL, REST, RNF220 and SETDB1. Interacts with C6orf89. Interacts with MYT1L. In terms of processing, ubiquitinated by RNF220 that leads to proteasomal degradation.

The protein resides in the nucleus. Its function is as follows. Acts as a transcriptional repressor. Interacts with MXI1 to repress MYC responsive genes and antagonize MYC oncogenic activities. Interacts with MAD-MAX heterodimers by binding to MAD. The heterodimer then represses transcription by tethering SIN3B to DNA. Also forms a complex with FOXK1 which represses transcription. With FOXK1, regulates cell cycle progression probably by repressing cell cycle inhibitor genes expression. As part of the SIN3B complex represses transcription and counteracts the histone acetyltransferase activity of EP300 through the recognition H3K27ac marks by PHF12 and the activity of the histone deacetylase HDAC2. SIN3B complex is recruited downstream of the constitutively active genes transcriptional start sites through interaction with histones and mitigates histone acetylation and RNA polymerase II progression within transcribed regions contributing to the regulation of transcription. This Mus musculus (Mouse) protein is Paired amphipathic helix protein Sin3b (Sin3b).